Consider the following 294-residue polypeptide: tRNA pseudouridine synthase B (294 aa).

Residue D39 is the Nucleophile of the active site.

This sequence belongs to the pseudouridine synthase TruB family. Type 1 subfamily.

The enzyme catalyses uridine(55) in tRNA = pseudouridine(55) in tRNA. Its function is as follows. Responsible for synthesis of pseudouridine from uracil-55 in the psi GC loop of transfer RNAs. In Streptococcus pyogenes serotype M6 (strain ATCC BAA-946 / MGAS10394), this protein is tRNA pseudouridine synthase B.